The following is a 548-amino-acid chain: 2-succinyl-5-enolpyruvyl-6-hydroxy-3-cyclohexene-1-carboxylate synthase (548 aa).

Belongs to the TPP enzyme family. MenD subfamily. In terms of assembly, homodimer. Requires Mg(2+) as cofactor. Mn(2+) serves as cofactor. Thiamine diphosphate is required as a cofactor.

It catalyses the reaction isochorismate + 2-oxoglutarate + H(+) = 5-enolpyruvoyl-6-hydroxy-2-succinyl-cyclohex-3-ene-1-carboxylate + CO2. The protein operates within quinol/quinone metabolism; 1,4-dihydroxy-2-naphthoate biosynthesis; 1,4-dihydroxy-2-naphthoate from chorismate: step 2/7. Its pathway is quinol/quinone metabolism; menaquinone biosynthesis. Its function is as follows. Catalyzes the thiamine diphosphate-dependent decarboxylation of 2-oxoglutarate and the subsequent addition of the resulting succinic semialdehyde-thiamine pyrophosphate anion to isochorismate to yield 2-succinyl-5-enolpyruvyl-6-hydroxy-3-cyclohexene-1-carboxylate (SEPHCHC). This is 2-succinyl-5-enolpyruvyl-6-hydroxy-3-cyclohexene-1-carboxylate synthase from Mycolicibacterium vanbaalenii (strain DSM 7251 / JCM 13017 / BCRC 16820 / KCTC 9966 / NRRL B-24157 / PYR-1) (Mycobacterium vanbaalenii).